The sequence spans 553 residues: Transcription factor MYB65 (553 aa).

The segment at 1-44 (MSYTTATADSDDGMHSSIHNESPAPDSISNGCRSRGKRSVLKKG) is disordered. 2 consecutive HTH myb-type domains span residues 38–90 (RSVL…ANHL) and 91–145 (RPNL…KRRQ). DNA-binding regions (H-T-H motif) lie at residues 66-90 (WNAV…ANHL) and 118-141 (WAQM…NTRI).

Mostly expressed in roots (e.g. root tips), stems, pollen, shoot apices, flowers and floral shoot tips, and, to a lower extent, in leaves and siliques.

It localises to the nucleus. Its function is as follows. Transcriptional activator of alpha-amylase expression that binds to 5'-CAACTGTC-3' motif in target gene promoter. In vegetative tissues, inhibits growth by reducing cell proliferation. Promotes the expression of aleurone-related genes (e.g. CP1, CP, GASA1, BXL1 and BXL2) in seeds. Together with MYB33 and MYB101, promotes the programmed cell death (PCD) the vacuolation of protein storage vacuoles (PSVs) in the aleurone layers during seed germination. Together with MYB33, facilitates anther and tapetum development. The chain is Transcription factor MYB65 from Arabidopsis thaliana (Mouse-ear cress).